The chain runs to 397 residues: N(6)-adenosine-methyltransferase non-catalytic subunit METTL14 (397 aa).

2 disordered regions span residues 37–67 (NAEDINSSRQLNSGGQREEEDGGASSSKKTP) and 368–397 (ELLRPKSPPPNSKVLRGRGRGFPRGRGRPR). Polar residues predominate over residues 40–51 (DINSSRQLNSGG). Positions 382–397 (LRGRGRGFPRGRGRPR) are enriched in basic residues.

It belongs to the MT-A70-like family. In terms of assembly, component of the WMM complex, a N6-methyltransferase complex composed of a catalytic subcomplex, named MAC, and of an associated subcomplex, named MACOM. The MAC subcomplex is composed of Ime4/Mettl3 and Mettl14. The MACOM subcomplex is composed of fl(2)d, Flacc/Xio, Hakai, vir, and, in some cases of nito.

The protein localises to the nucleus. In terms of biological role, non-catalytic component of the WMM complex, a complex that mediates N6-methyladenosine (m6A) methylation of mRNAs, a modification that plays a role in the efficiency of mRNA splicing and is required for sex determination. In the heterodimer formed with Ime4/Mettl3, Mettl14 constitutes the RNA-binding scaffold that recognizes the substrate rather than the catalytic core. Required for sex determination and dosage compensation via Sxl alternative splicing: m6A methylation acts as a key regulator of Sxl pre-mRNA and promotes female-specific alternative splicing of Sxl, which determines female physiognomy. M6A methylation is also required for neuronal functions. This chain is N(6)-adenosine-methyltransferase non-catalytic subunit METTL14, found in Drosophila melanogaster (Fruit fly).